The following is a 51-amino-acid chain: Cytochrome b559 subunit beta (51 aa).

The chain crosses the membrane as a helical span at residues 26–42 (WLAVHALAVPTVFFIGS). Heme is bound at residue His30.

It belongs to the PsbE/PsbF family. As to quaternary structure, heterodimer of an alpha subunit and a beta subunit. PSII is composed of 1 copy each of membrane proteins PsbA, PsbB, PsbC, PsbD, PsbE, PsbF, PsbH, PsbI, PsbJ, PsbK, PsbL, PsbM, PsbT, PsbY, PsbZ, Psb30/Ycf12, at least 3 peripheral proteins of the oxygen-evolving complex and a large number of cofactors. It forms dimeric complexes. The cofactor is heme b.

The protein resides in the plastid. It is found in the chloroplast thylakoid membrane. Its function is as follows. This b-type cytochrome is tightly associated with the reaction center of photosystem II (PSII). PSII is a light-driven water:plastoquinone oxidoreductase that uses light energy to abstract electrons from H(2)O, generating O(2) and a proton gradient subsequently used for ATP formation. It consists of a core antenna complex that captures photons, and an electron transfer chain that converts photonic excitation into a charge separation. The polypeptide is Cytochrome b559 subunit beta (Bigelowiella natans (Pedinomonas minutissima)).